Reading from the N-terminus, the 608-residue chain is 1-phosphatidylinositol 4,5-bisphosphate phosphodiesterase zeta-1 (608 aa).

The EF-hand domain maps to 35-70 (CSYIHVKQIFKDNDRLKQGRITIEEFRAIYRIITHR). Residues 155 to 299 (QDMTHPLNDY…LKFKILVKNK (145 aa)) form the PI-PLC X-box domain. Active-site residues include histidine 170 and histidine 215. The interval 305-324 (KETHERKGSDKRGDNQDKET) is disordered. The PI-PLC Y-box domain occupies 349–465 (LSDLVIYTKA…GYILKPHFLR (117 aa)). One can recognise a C2 domain in the interval 465–589 (RESKSYFNPS…KGYRRIPLFS (125 aa)).

As to quaternary structure, interacts via its C2 domain with PtdIns(3)P and, to a lesser extent, PtdIns(5)P in vitro. It depends on Ca(2+) as a cofactor. In terms of tissue distribution, expressed specifically in testis and sperm. Weakly expressed in pancreatic-duct cells. Up-regulated in pancreatic-duct cells from patients with cystic fibrosis.

It is found in the nucleus. The protein localises to the cytoplasm. The protein resides in the perinuclear region. It carries out the reaction a 1,2-diacyl-sn-glycero-3-phospho-(1D-myo-inositol-4,5-bisphosphate) + H2O = 1D-myo-inositol 1,4,5-trisphosphate + a 1,2-diacyl-sn-glycerol + H(+). Functionally, the production of the second messenger molecules diacylglycerol (DAG) and inositol 1,4,5-trisphosphate (IP3) is mediated by activated phosphatidylinositol-specific phospholipase C enzymes. In vitro, hydrolyzes PtdIns(4,5)P2 in a Ca(2+)-dependent manner. Triggers intracellular Ca(2+) oscillations in oocytes solely during M phase and is involved in inducing oocyte activation and initiating embryonic development up to the blastocyst stage. Is therefore a strong candidate for the egg-activating soluble sperm factor that is transferred from the sperm into the egg cytoplasm following gamete membrane fusion. May exert an inhibitory effect on phospholipase-C-coupled processes that depend on calcium ions and protein kinase C, including CFTR trafficking and function. This Homo sapiens (Human) protein is 1-phosphatidylinositol 4,5-bisphosphate phosphodiesterase zeta-1.